The following is a 1187-amino-acid chain: DNA-directed RNA polymerase subunit beta (1187 aa).

It belongs to the RNA polymerase beta chain family. As to quaternary structure, the RNAP catalytic core consists of 2 alpha, 1 beta, 1 beta' and 1 omega subunit. When a sigma factor is associated with the core the holoenzyme is formed, which can initiate transcription.

The catalysed reaction is RNA(n) + a ribonucleoside 5'-triphosphate = RNA(n+1) + diphosphate. Functionally, DNA-dependent RNA polymerase catalyzes the transcription of DNA into RNA using the four ribonucleoside triphosphates as substrates. The sequence is that of DNA-directed RNA polymerase subunit beta from Petrotoga mobilis (strain DSM 10674 / SJ95).